The chain runs to 160 residues: Peptide deformylase 1 (160 aa).

The Fe cation site is built by C90 and H132. E133 is an active-site residue. H136 lines the Fe cation pocket.

This sequence belongs to the polypeptide deformylase family. Fe(2+) is required as a cofactor.

It catalyses the reaction N-terminal N-formyl-L-methionyl-[peptide] + H2O = N-terminal L-methionyl-[peptide] + formate. In terms of biological role, removes the formyl group from the N-terminal Met of newly synthesized proteins. Requires at least a dipeptide for an efficient rate of reaction. N-terminal L-methionine is a prerequisite for activity but the enzyme has broad specificity at other positions. The sequence is that of Peptide deformylase 1 (defA) from Bacillus subtilis (strain 168).